The chain runs to 470 residues: tRNA-2-methylthio-N(6)-dimethylallyladenosine synthase (470 aa).

The MTTase N-terminal domain maps to 20–138; that stretch reads PRVHIETFGC…LPELVERARS (119 aa). Positions 29, 65, 99, 176, 180, and 183 each coordinate [4Fe-4S] cluster. The 237-residue stretch at 162–398 folds into the Radical SAM core domain; sequence REGDLKAWVT…MEVQNRIARA (237 aa). Positions 401-464 constitute a TRAM domain; it reads EARVGKVYDI…TWTLEGELVE (64 aa).

The protein belongs to the methylthiotransferase family. MiaB subfamily. As to quaternary structure, monomer. It depends on [4Fe-4S] cluster as a cofactor.

It is found in the cytoplasm. The enzyme catalyses N(6)-dimethylallyladenosine(37) in tRNA + (sulfur carrier)-SH + AH2 + 2 S-adenosyl-L-methionine = 2-methylsulfanyl-N(6)-dimethylallyladenosine(37) in tRNA + (sulfur carrier)-H + 5'-deoxyadenosine + L-methionine + A + S-adenosyl-L-homocysteine + 2 H(+). In terms of biological role, catalyzes the methylthiolation of N6-(dimethylallyl)adenosine (i(6)A), leading to the formation of 2-methylthio-N6-(dimethylallyl)adenosine (ms(2)i(6)A) at position 37 in tRNAs that read codons beginning with uridine. The polypeptide is tRNA-2-methylthio-N(6)-dimethylallyladenosine synthase (Symbiobacterium thermophilum (strain DSM 24528 / JCM 14929 / IAM 14863 / T)).